Reading from the N-terminus, the 387-residue chain is 1-deoxy-D-xylulose 5-phosphate reductoisomerase (387 aa).

Residues threonine 10, glycine 11, serine 12, isoleucine 13, glycine 36, lysine 37, asparagine 38, and asparagine 123 each contribute to the NADPH site. Lysine 124 provides a ligand contact to 1-deoxy-D-xylulose 5-phosphate. Glutamate 125 provides a ligand contact to NADPH. Aspartate 149 provides a ligand contact to Mn(2+). Residues serine 150, glutamate 151, serine 175, and histidine 198 each contribute to the 1-deoxy-D-xylulose 5-phosphate site. Mn(2+) is bound at residue glutamate 151. Residue glycine 204 coordinates NADPH. 1-deoxy-D-xylulose 5-phosphate contacts are provided by serine 211, asparagine 216, lysine 217, and glutamate 220. Glutamate 220 is a binding site for Mn(2+).

The protein belongs to the DXR family. The cofactor is Mg(2+). Mn(2+) serves as cofactor.

The enzyme catalyses 2-C-methyl-D-erythritol 4-phosphate + NADP(+) = 1-deoxy-D-xylulose 5-phosphate + NADPH + H(+). Its pathway is isoprenoid biosynthesis; isopentenyl diphosphate biosynthesis via DXP pathway; isopentenyl diphosphate from 1-deoxy-D-xylulose 5-phosphate: step 1/6. Its function is as follows. Catalyzes the NADPH-dependent rearrangement and reduction of 1-deoxy-D-xylulose-5-phosphate (DXP) to 2-C-methyl-D-erythritol 4-phosphate (MEP). The chain is 1-deoxy-D-xylulose 5-phosphate reductoisomerase from Pelotomaculum thermopropionicum (strain DSM 13744 / JCM 10971 / SI).